The following is a 54-amino-acid chain: Ovomucoid (54 aa).

The 51-residue stretch at 4-54 folds into the Kazal-like domain; the sequence is VNCSDYPKPVCSLLYMPLCGSDNKTYGNKCNFCNAVADSNGTLTLSHFGKC. Intrachain disulfides connect Cys-6–Cys-36, Cys-14–Cys-33, and Cys-22–Cys-54. Asn-43 carries an N-linked (GlcNAc...) asparagine glycan.

It is found in the secreted. The chain is Ovomucoid from Geococcyx californianus (Greater roadrunner).